The sequence spans 304 residues: Nod factor export ATP-binding protein I (304 aa).

The 231-residue stretch at 6–236 folds into the ABC transporter domain; it reads IDFQQVEKRY…EIGCDVIEIY (231 aa). 38–45 is a binding site for ATP; sequence GPNGAGKT.

Belongs to the ABC transporter superfamily. Lipooligosaccharide exporter (TC 3.A.1.102) family. As to quaternary structure, the complex is composed of two ATP-binding proteins (NodI) and two transmembrane proteins (NodJ).

It is found in the cell inner membrane. Its function is as follows. Part of the ABC transporter complex NodIJ involved in the export of the nodulation factors (Nod factors), the bacterial signal molecules that induce symbiosis and subsequent nodulation induction. Nod factors are LCO (lipo-chitin oligosaccharide), a modified beta-1,4-linked N-acetylglucosamine oligosaccharide. This subunit is responsible for energy coupling to the transport system. This is Nod factor export ATP-binding protein I from Burkholderia thailandensis (strain ATCC 700388 / DSM 13276 / CCUG 48851 / CIP 106301 / E264).